A 487-amino-acid chain; its full sequence is Multiple inositol polyphosphate phosphatase 1 (487 aa).

Residues 1 to 30 (MLRAPGCLLRTSVAPAAALAAALLSSLARC) form the signal peptide. H89 is an active-site residue. N-linked (GlcNAc...) asparagine glycosylation is found at N242 and N481. A Prevents secretion from ER motif is present at residues 484–487 (SDEL).

It belongs to the histidine acid phosphatase family. MINPP1 subfamily. In terms of processing, N-glycosylated. Widely expressed with highest levels in kidney, liver, cerebellum and placenta.

It localises to the endoplasmic reticulum lumen. The protein resides in the secreted. The protein localises to the cell membrane. The enzyme catalyses 1D-myo-inositol hexakisphosphate + H2O = 1D-myo-inositol 1,2,4,5,6-pentakisphosphate + phosphate. The catalysed reaction is 1D-myo-inositol 1,2,4,5,6-pentakisphosphate + H2O = 1D-myo-inositol 1,2,5,6-tetrakisphosphate + phosphate. It carries out the reaction 1D-myo-inositol 1,2,5,6-tetrakisphosphate + H2O = 1D-myo-inositol 1,2,6-trisphosphate + phosphate. It catalyses the reaction 1D-myo-inositol 1,2,6-trisphosphate + H2O = 1D-myo-inositol 1,2-bisphosphate + phosphate. The enzyme catalyses 1D-myo-inositol 1,2-bisphosphate + H2O = 1D-myo-inositol 2-phosphate + phosphate. The catalysed reaction is 1D-myo-inositol hexakisphosphate + H2O = 1D-myo-inositol 1,2,3,5,6-pentakisphosphate + phosphate. It carries out the reaction 1D-myo-inositol 1,2,3,5,6-pentakisphosphate + H2O = 1D-myo-inositol 1,2,3,6-tetrakisphosphate + phosphate. It catalyses the reaction 1D-myo-inositol 1,2,3,6-tetrakisphosphate + H2O = 1D-myo-inositol 1,2,3-trisphosphate + phosphate. The enzyme catalyses 1D-myo-inositol 1,2,3-trisphosphate + H2O = 1D-myo-inositol 2,3-bisphosphate + phosphate. The catalysed reaction is 1D-myo-inositol 2,3-bisphosphate + H2O = 1D-myo-inositol 2-phosphate + phosphate. It carries out the reaction 1D-myo-inositol 1,3,4,5,6-pentakisphosphate + H2O = 1D-myo-inositol 1,4,5,6-tetrakisphosphate + phosphate. It catalyses the reaction 1D-myo-inositol 1,4,5,6-tetrakisphosphate + H2O = 1D-myo-inositol 1,4,5-trisphosphate + phosphate. The enzyme catalyses (2R)-2,3-bisphosphoglycerate + H2O = (2R)-2-phosphoglycerate + phosphate. In terms of biological role, multiple inositol polyphosphate phosphatase that hydrolyzes 1D-myo-inositol 1,3,4,5,6-pentakisphosphate (InsP5[2OH]) and 1D-myo-inositol hexakisphosphate (InsP6) to a range of less phosphorylated inositol phosphates. This regulates the availability of these various small molecule second messengers and metal chelators which control many aspects of cell physiology. Has a weak in vitro activity towards 1D-myo-inositol 1,4,5-trisphosphate which is unlikely to be physiologically relevant. By regulating intracellular inositol polyphosphates pools, which act as metal chelators, it may control the availability of intracellular calcium and iron, which are important for proper neuronal development and homeostasis. May have a dual substrate specificity, and function as a 2,3-bisphosphoglycerate 3-phosphatase hydrolyzing 2,3-bisphosphoglycerate to 2-phosphoglycerate. 2,3-bisphosphoglycerate (BPG) is formed as part of the Rapoport-Luebering glycolytic bypass and is a regulator of systemic oxygen homeostasis as the major allosteric effector of hemoglobin. This is Multiple inositol polyphosphate phosphatase 1 from Homo sapiens (Human).